Reading from the N-terminus, the 195-residue chain is Pyridoxal 5'-phosphate synthase subunit PdxT (195 aa).

L-glutamine is bound at residue 49–51; sequence GES. The active-site Nucleophile is the Cys81. L-glutamine-binding positions include Arg113 and 141-142; that span reads IR. Residues His177 and Glu179 each act as charge relay system in the active site.

It belongs to the glutaminase PdxT/SNO family. In terms of assembly, in the presence of PdxS, forms a dodecamer of heterodimers. Only shows activity in the heterodimer.

The catalysed reaction is aldehydo-D-ribose 5-phosphate + D-glyceraldehyde 3-phosphate + L-glutamine = pyridoxal 5'-phosphate + L-glutamate + phosphate + 3 H2O + H(+). The enzyme catalyses L-glutamine + H2O = L-glutamate + NH4(+). Its pathway is cofactor biosynthesis; pyridoxal 5'-phosphate biosynthesis. Functionally, catalyzes the hydrolysis of glutamine to glutamate and ammonia as part of the biosynthesis of pyridoxal 5'-phosphate. The resulting ammonia molecule is channeled to the active site of PdxS. In Mycolicibacterium vanbaalenii (strain DSM 7251 / JCM 13017 / BCRC 16820 / KCTC 9966 / NRRL B-24157 / PYR-1) (Mycobacterium vanbaalenii), this protein is Pyridoxal 5'-phosphate synthase subunit PdxT.